A 90-amino-acid polypeptide reads, in one-letter code: UPF0237 protein MJ1558 (90 aa).

The ACT domain maps to 5–79 (VVSVIGQDRT…EELGVQVIVQ (75 aa)).

The protein belongs to the UPF0237 family.

This chain is UPF0237 protein MJ1558, found in Methanocaldococcus jannaschii (strain ATCC 43067 / DSM 2661 / JAL-1 / JCM 10045 / NBRC 100440) (Methanococcus jannaschii).